Consider the following 219-residue polypeptide: Dynein light chain Tctex-type 4 (219 aa).

The tract at residues 1-84 is disordered; that stretch reads MACRTLPSRR…RRPSLGPVPP (84 aa). Residues 9–20 show a composition bias toward basic and acidic residues; the sequence is RRQEEETTKDLA. At S64 the chain carries Phosphoserine.

It belongs to the dynein light chain Tctex-type family. In terms of assembly, interacts with ENG/endoglin, TGFBR2 and TGFBR3. Interacts with PPP1CC.

The protein resides in the cell projection. It localises to the cilium. It is found in the flagellum. Its subcellular location is the cytoplasmic vesicle. The protein localises to the secretory vesicle. The protein resides in the acrosome. It localises to the cytoplasm. It is found in the cytoskeleton. Its subcellular location is the cilium axoneme. The protein localises to the nucleus. The protein resides in the microtubule organizing center. The sequence is that of Dynein light chain Tctex-type 4 (Dynlt4) from Mus musculus (Mouse).